A 120-amino-acid chain; its full sequence is Aspartate 1-decarboxylase (120 aa).

Residue Ser25 is the Schiff-base intermediate with substrate; via pyruvic acid of the active site. Ser25 is subject to Pyruvic acid (Ser). Thr57 contacts substrate. Residue Tyr58 is the Proton donor of the active site. 72–74 (GAA) provides a ligand contact to substrate.

It belongs to the PanD family. As to quaternary structure, heterooctamer of four alpha and four beta subunits. Pyruvate serves as cofactor. Post-translationally, is synthesized initially as an inactive proenzyme, which is activated by self-cleavage at a specific serine bond to produce a beta-subunit with a hydroxyl group at its C-terminus and an alpha-subunit with a pyruvoyl group at its N-terminus.

Its subcellular location is the cytoplasm. It catalyses the reaction L-aspartate + H(+) = beta-alanine + CO2. The protein operates within cofactor biosynthesis; (R)-pantothenate biosynthesis; beta-alanine from L-aspartate: step 1/1. Functionally, catalyzes the pyruvoyl-dependent decarboxylation of aspartate to produce beta-alanine. The chain is Aspartate 1-decarboxylase from Helicobacter hepaticus (strain ATCC 51449 / 3B1).